The sequence spans 337 residues: Phosphate acyltransferase (337 aa).

It belongs to the PlsX family. Homodimer. Probably interacts with PlsY.

Its subcellular location is the cytoplasm. It catalyses the reaction a fatty acyl-[ACP] + phosphate = an acyl phosphate + holo-[ACP]. Its pathway is lipid metabolism; phospholipid metabolism. Functionally, catalyzes the reversible formation of acyl-phosphate (acyl-PO(4)) from acyl-[acyl-carrier-protein] (acyl-ACP). This enzyme utilizes acyl-ACP as fatty acyl donor, but not acyl-CoA. The polypeptide is Phosphate acyltransferase (Listeria innocua serovar 6a (strain ATCC BAA-680 / CLIP 11262)).